The sequence spans 88 residues: Small ribosomal subunit protein bS16 (88 aa).

Belongs to the bacterial ribosomal protein bS16 family.

The sequence is that of Small ribosomal subunit protein bS16 from Sorangium cellulosum (strain So ce56) (Polyangium cellulosum (strain So ce56)).